A 291-amino-acid chain; its full sequence is HTH-type transcriptional activator AmpR (291 aa).

The region spanning 6-63 (IPLNSLRAFEAAARHLSFTRAAIELNVTHSAISQHVKSLEQQLNCQLFVRGSRGLMLT) is the HTH lysR-type domain. A DNA-binding region (H-T-H motif) is located at residues 23 to 42 (FTRAAIELNVTHSAISQHVK).

The protein belongs to the LysR transcriptional regulatory family.

The protein localises to the cytoplasm. In terms of biological role, regulates the expression of the beta-lactamase gene. Represses cephalosporinase (AmpC) in the presence of beta-lactams and induces it in the absence of them. The chain is HTH-type transcriptional activator AmpR (ampR) from Citrobacter freundii.